The chain runs to 106 residues: Transcription factor TRY (106 aa).

A Myb-like domain is found at 34–71; the sequence is TEQEEDLIFRMYRLVGDRWDLIAGRVPGRQPEEIERYW. The disordered stretch occupies residues 83–106; it reads RRQLHSSSHKHTKPHRPRFSIYPS. Residues 84 to 100 show a composition bias toward basic residues; it reads RQLHSSSHKHTKPHRPR.

In terms of assembly, interacts with GL3 and thus prevents GL1 GL3 interaction. Also interacts with BHLH2. In terms of tissue distribution, expressed in roots, leaves, siliques and inflorescences.

The protein localises to the nucleus. Transcription factor. Involved in epidermal cell fate specification. Negative regulator of trichome development, including endoreplication, by lateral inhibition involving intercellular interactions. Promotes the formation of hair developing cells (trichoblasts) in H position in root epidermis, probably by inhibiting non-hair cell (atrichoblasts) formation. In Arabidopsis thaliana (Mouse-ear cress), this protein is Transcription factor TRY (TRY).